Consider the following 156-residue polypeptide: Large ribosomal subunit protein uL22 (156 aa).

This sequence belongs to the universal ribosomal protein uL22 family. In terms of assembly, part of the 50S ribosomal subunit.

Its function is as follows. This protein binds specifically to 23S rRNA. It makes multiple contacts with different domains of the 23S rRNA in the assembled 50S subunit and ribosome. In terms of biological role, the globular domain of the protein is located near the polypeptide exit tunnel on the outside of the subunit, while an extended beta-hairpin is found that lines the wall of the exit tunnel in the center of the 70S ribosome. In Aeropyrum pernix (strain ATCC 700893 / DSM 11879 / JCM 9820 / NBRC 100138 / K1), this protein is Large ribosomal subunit protein uL22.